The primary structure comprises 343 residues: Holliday junction branch migration complex subunit RuvB (343 aa).

A large ATPase domain (RuvB-L) region spans residues 1–181; that stretch reads MDRIVEIEKV…FGMQFRLQFY (181 aa). ATP-binding positions include Leu20, Arg21, Gly62, Lys65, Thr66, Thr67, 128 to 130, Arg171, Tyr181, and Arg218; that span reads EDF. Thr66 provides a ligand contact to Mg(2+). Residues 182–252 form a small ATPAse domain (RuvB-S) region; it reads TDNELARIIS…RAKSSLDSLG (71 aa). The head domain (RuvB-H) stretch occupies residues 255-343; it reads DLGFDEMDLK…EKQNKGLFNE (89 aa). Positions 308 and 313 each coordinate DNA.

This sequence belongs to the RuvB family. In terms of assembly, homohexamer. Forms an RuvA(8)-RuvB(12)-Holliday junction (HJ) complex. HJ DNA is sandwiched between 2 RuvA tetramers; dsDNA enters through RuvA and exits via RuvB. An RuvB hexamer assembles on each DNA strand where it exits the tetramer. Each RuvB hexamer is contacted by two RuvA subunits (via domain III) on 2 adjacent RuvB subunits; this complex drives branch migration. In the full resolvosome a probable DNA-RuvA(4)-RuvB(12)-RuvC(2) complex forms which resolves the HJ.

The protein localises to the cytoplasm. It catalyses the reaction ATP + H2O = ADP + phosphate + H(+). The RuvA-RuvB-RuvC complex processes Holliday junction (HJ) DNA during genetic recombination and DNA repair, while the RuvA-RuvB complex plays an important role in the rescue of blocked DNA replication forks via replication fork reversal (RFR). RuvA specifically binds to HJ cruciform DNA, conferring on it an open structure. The RuvB hexamer acts as an ATP-dependent pump, pulling dsDNA into and through the RuvAB complex. RuvB forms 2 homohexamers on either side of HJ DNA bound by 1 or 2 RuvA tetramers; 4 subunits per hexamer contact DNA at a time. Coordinated motions by a converter formed by DNA-disengaged RuvB subunits stimulates ATP hydrolysis and nucleotide exchange. Immobilization of the converter enables RuvB to convert the ATP-contained energy into a lever motion, pulling 2 nucleotides of DNA out of the RuvA tetramer per ATP hydrolyzed, thus driving DNA branch migration. The RuvB motors rotate together with the DNA substrate, which together with the progressing nucleotide cycle form the mechanistic basis for DNA recombination by continuous HJ branch migration. Branch migration allows RuvC to scan DNA until it finds its consensus sequence, where it cleaves and resolves cruciform DNA. This Campylobacter fetus subsp. fetus (strain 82-40) protein is Holliday junction branch migration complex subunit RuvB.